The sequence spans 178 residues: Fatty-acid and retinol-binding protein 1 (178 aa).

A signal peptide spans 1 to 16 (MYHQLILMALIGVIMA). N-linked (GlcNAc...) asparagine glycans are attached at residues Asn-44 and Asn-75. Coiled-coil stretches lie at residues 67 to 89 (DAAL…ELRN) and 123 to 154 (KLDM…LKAT). Asn-157 carries an N-linked (GlcNAc...) asparagine glycan.

Belongs to the fatty-acid and retinol-binding protein (FARBP) family. Post-translationally, N-glycosylated.

It localises to the secreted. In terms of biological role, binds retinol and different fatty acids. This chain is Fatty-acid and retinol-binding protein 1, found in Onchocerca gutturosa.